A 410-amino-acid chain; its full sequence is Cysteine desulfurase IscS (410 aa).

Residues 80 to 81 (AT), Asn-160, Gln-188, and 208 to 210 (SGH) each bind pyridoxal 5'-phosphate. Lys-211 is modified (N6-(pyridoxal phosphate)lysine). Thr-248 provides a ligand contact to pyridoxal 5'-phosphate. The Cysteine persulfide intermediate role is filled by Cys-334. Cys-334 is a binding site for [2Fe-2S] cluster.

Belongs to the class-V pyridoxal-phosphate-dependent aminotransferase family. NifS/IscS subfamily. In terms of assembly, homodimer. Forms a heterotetramer with IscU, interacts with other sulfur acceptors. Pyridoxal 5'-phosphate serves as cofactor.

It is found in the cytoplasm. It carries out the reaction (sulfur carrier)-H + L-cysteine = (sulfur carrier)-SH + L-alanine. It participates in cofactor biosynthesis; iron-sulfur cluster biosynthesis. Its function is as follows. Master enzyme that delivers sulfur to a number of partners involved in Fe-S cluster assembly, tRNA modification or cofactor biosynthesis. Catalyzes the removal of elemental sulfur atoms from cysteine to produce alanine. Functions as a sulfur delivery protein for Fe-S cluster synthesis onto IscU, an Fe-S scaffold assembly protein, as well as other S acceptor proteins. The chain is Cysteine desulfurase IscS from Rickettsia bellii (strain OSU 85-389).